Here is a 77-residue protein sequence, read N- to C-terminus: Small ribosomal subunit protein bS16 (77 aa).

Belongs to the bacterial ribosomal protein bS16 family.

In Wolinella succinogenes (strain ATCC 29543 / DSM 1740 / CCUG 13145 / JCM 31913 / LMG 7466 / NCTC 11488 / FDC 602W) (Vibrio succinogenes), this protein is Small ribosomal subunit protein bS16.